Reading from the N-terminus, the 206-residue chain is Small ribosomal subunit protein uS4 (206 aa).

Positions 96-159 (SRLDNVVYRM…KKQARIVEGL (64 aa)) constitute an S4 RNA-binding domain.

The protein belongs to the universal ribosomal protein uS4 family. Part of the 30S ribosomal subunit. Contacts protein S5. The interaction surface between S4 and S5 is involved in control of translational fidelity.

In terms of biological role, one of the primary rRNA binding proteins, it binds directly to 16S rRNA where it nucleates assembly of the body of the 30S subunit. Its function is as follows. With S5 and S12 plays an important role in translational accuracy. This is Small ribosomal subunit protein uS4 from Chromobacterium violaceum (strain ATCC 12472 / DSM 30191 / JCM 1249 / CCUG 213 / NBRC 12614 / NCIMB 9131 / NCTC 9757 / MK).